The chain runs to 283 residues: D-alanine aminotransferase (283 aa).

Tyr-31 is a substrate binding site. Arg-50 is a binding site for pyridoxal 5'-phosphate. Residues Arg-98 and His-100 each contribute to the substrate site. Lys-144 acts as the Proton acceptor in catalysis. Lys-144 carries the N6-(pyridoxal phosphate)lysine modification. A pyridoxal 5'-phosphate-binding site is contributed by Glu-176.

It belongs to the class-IV pyridoxal-phosphate-dependent aminotransferase family. As to quaternary structure, homodimer. Pyridoxal 5'-phosphate serves as cofactor.

It catalyses the reaction D-alanine + 2-oxoglutarate = D-glutamate + pyruvate. Its function is as follows. Acts on the D-isomers of alanine, leucine, aspartate, glutamate, aminobutyrate, norvaline and asparagine. The enzyme transfers an amino group from a substrate D-amino acid to the pyridoxal phosphate cofactor to form pyridoxamine and an alpha-keto acid in the first half-reaction. The second half-reaction is the reverse of the first, transferring the amino group from the pyridoxamine to a second alpha-keto acid to form the product D-amino acid via a ping-pong mechanism. This is an important process in the formation of D-alanine and D-glutamate, which are essential bacterial cell wall components. This chain is D-alanine aminotransferase (dat), found in Bacillus licheniformis.